The following is a 76-amino-acid chain: Adipogenesis regulatory factor (76 aa).

In terms of tissue distribution, expressed in adipose tissue (at protein level). Highly expressed in omental and subcutaneous adipose tissues. Expressed in heart, cornea, liver, kidney and spleen.

It is found in the nucleus. Its function is as follows. Plays a role in fat cell development; promotes adipogenic differentiation and stimulates transcription initiation of master adipogenesis factors like PPARG and CEBPA at early stages of preadipocyte differentiation. Its overexpression confers resistance to the anticancer chemotherapeutic drug cisplatin. This Homo sapiens (Human) protein is Adipogenesis regulatory factor (ADIRF).